A 734-amino-acid polypeptide reads, in one-letter code: MALRFPRFSQGLAQDPTTRRIWFGIATAHDFESHDDITEERLYQNIFASHFGQLAIIFLWTSGNLFHVAWQGNFESWVQDPLHVRPIAHAIWDPHFGQPAVEAFTRGGALGPVNIAYSGVYQWWYTIGLRTNEDLYTGALFLLFLSAISLIAGWLHLQPKWKPSVSWFKNAESRLNHHLSGLFGVSSLAWTGHLVHVAIPGSRGEYVRWNNFLDVLPHPQGLGPLFTGQWNLYAQNPDSGSHLFGTSQGAGTAILTLLGGFHPQTQSLWLTDMAHHHLAIAFIFLVAGHMYRTNFGIGHSMKDLLEAHIPPGGRLGRGHKGLYDTINNSIHFQLGLALASLGVITSLVAQHMYSLPAYAFIAQDFTTQAALYTHHQYIAGFIMTGAFAHGAIFFIRDYNPEQNEDNVLARMLDHKEAIISHLSWASLFLGFHTLGLYVHNDVMLAFGTPEKQILIEPIFAQWIQSAHGKTSYGFDVLLSSTNGPAFNAGRSIWLPGWLNAVNENSNSLFLTIGPGDFLVHHAIALGLHTTTLILVKGALDARGSKLMPDKKDFGYSFPCDGPGRGGTCDISAWDAFYLAVFWMLNTIGWVTFYWHWKHITLWQGNVSQFNESSTYLMGWLRDYLWLNSSQLINGYNPFGMNSLSVWAWMFLFGHLVWATGFMFLISWRGYWQELIETLAWAHERTPLANLIRWRDKPVALSIVQARLVGLAHFSVGYIFTYAAFLIASTSGKFG.

A run of 8 helical transmembrane segments spans residues 46-69 (IFAS…FHVA), 135-158 (LYTG…LHLQ), 175-199 (LNHH…HVAI), 273-291 (MAHH…GHMY), 330-353 (IHFQ…QHMY), 369-395 (AALY…IFFI), 417-439 (AIIS…LYVH), and 517-535 (FLVH…LILV). [4Fe-4S] cluster-binding residues include Cys-559 and Cys-568. 2 helical membrane passes run 575-596 (AFYL…YWHW) and 643-665 (LSVW…MFLI). Residues His-654, Met-662, and Tyr-670 each contribute to the chlorophyll a site. Trp-671 is a phylloquinone binding site. A helical transmembrane segment spans residues 707 to 727 (LVGLAHFSVGYIFTYAAFLIA).

It belongs to the PsaA/PsaB family. As to quaternary structure, the PsaA/B heterodimer binds the P700 chlorophyll special pair and subsequent electron acceptors. PSI consists of a core antenna complex that captures photons, and an electron transfer chain that converts photonic excitation into a charge separation. The eukaryotic PSI reaction center is composed of at least 11 subunits. It depends on P700 is a chlorophyll a/chlorophyll a' dimer, A0 is one or more chlorophyll a, A1 is one or both phylloquinones and FX is a shared 4Fe-4S iron-sulfur center. as a cofactor.

The protein resides in the plastid. It is found in the chloroplast thylakoid membrane. It catalyses the reaction reduced [plastocyanin] + hnu + oxidized [2Fe-2S]-[ferredoxin] = oxidized [plastocyanin] + reduced [2Fe-2S]-[ferredoxin]. PsaA and PsaB bind P700, the primary electron donor of photosystem I (PSI), as well as the electron acceptors A0, A1 and FX. PSI is a plastocyanin-ferredoxin oxidoreductase, converting photonic excitation into a charge separation, which transfers an electron from the donor P700 chlorophyll pair to the spectroscopically characterized acceptors A0, A1, FX, FA and FB in turn. Oxidized P700 is reduced on the lumenal side of the thylakoid membrane by plastocyanin. This chain is Photosystem I P700 chlorophyll a apoprotein A2, found in Nandina domestica (Heavenly bamboo).